We begin with the raw amino-acid sequence, 270 residues long: Type III pantothenate kinase (270 aa).

An ATP-binding site is contributed by 6 to 13; sequence DAGNTNIV. 107–110 is a substrate binding site; that stretch reads GADR. The Proton acceptor role is filled by D109. D129 lines the K(+) pocket. T132 is a binding site for ATP. T184 is a substrate binding site.

It belongs to the type III pantothenate kinase family. In terms of assembly, homodimer. NH4(+) serves as cofactor. The cofactor is K(+).

The protein localises to the cytoplasm. The catalysed reaction is (R)-pantothenate + ATP = (R)-4'-phosphopantothenate + ADP + H(+). Its pathway is cofactor biosynthesis; coenzyme A biosynthesis; CoA from (R)-pantothenate: step 1/5. Functionally, catalyzes the phosphorylation of pantothenate (Pan), the first step in CoA biosynthesis. The polypeptide is Type III pantothenate kinase (Gluconobacter oxydans (strain 621H) (Gluconobacter suboxydans)).